A 521-amino-acid chain; its full sequence is Methionine--tRNA ligase (521 aa).

The short motif at 14–24 (YYSSGNPHIGH) is the 'HIGH' region element. Residues Cys-129, Cys-132, Cys-151, and His-155 each coordinate Zn(2+). The 'KMSKS' region signature appears at 306-310 (KMSKS). Lys-309 contributes to the ATP binding site.

This sequence belongs to the class-I aminoacyl-tRNA synthetase family. MetG type 2A subfamily. As to quaternary structure, monomer. Zn(2+) is required as a cofactor.

It localises to the cytoplasm. The catalysed reaction is tRNA(Met) + L-methionine + ATP = L-methionyl-tRNA(Met) + AMP + diphosphate. In terms of biological role, is required not only for elongation of protein synthesis but also for the initiation of all mRNA translation through initiator tRNA(fMet) aminoacylation. This chain is Methionine--tRNA ligase, found in Ureaplasma parvum serovar 3 (strain ATCC 700970).